A 393-amino-acid polypeptide reads, in one-letter code: Bone morphogenetic protein 15 (393 aa).

The signal sequence occupies residues 1–25; that stretch reads MVLLSILRILLWGLVLFMEHRVQMT. Positions 26–268 are excised as a propeptide; the sequence is QVGQPSIAHL…DPSLLLRRAR (243 aa). Residues Asn-86 and Asn-237 are each glycosylated (N-linked (GlcNAc...) asparagine). 3 cysteine pairs are disulfide-bonded: Cys-292-Cys-358, Cys-321-Cys-390, and Cys-325-Cys-392. Asn-374 carries an N-linked (GlcNAc...) asparagine glycan.

Belongs to the TGF-beta family. Homodimer. But, in contrast to other members of this family, cannot be disulfide-linked.

The protein localises to the secreted. Functionally, may be involved in follicular development. Oocyte-specific growth/differentiation factor that stimulates folliculogenesis and granulosa cell (GC) growth. This Ovis aries (Sheep) protein is Bone morphogenetic protein 15 (BMP15).